Consider the following 320-residue polypeptide: Adhesin MafA 1 (320 aa).

The first 18 residues, 1 to 18 (MQARLLIPILFSVFILSA), serve as a signal peptide directing secretion. The N-palmitoyl cysteine moiety is linked to residue C19. The S-diacylglycerol cysteine moiety is linked to residue C19. Positions 288–320 (HMGNSAPSVEADNSHEGYGYSDEAVRRHRQGQP) are disordered.

This sequence belongs to the MafA family.

The protein localises to the cell outer membrane. This is Adhesin MafA 1 (mafA1) from Neisseria meningitidis serogroup A / serotype 4A (strain DSM 15465 / Z2491).